A 257-amino-acid polypeptide reads, in one-letter code: MERSNAATKCGEEPRSGSRRLPKAEGDKSGSAGAPSKNSSRLGGRPCMCTAGRRPNRASGRRRRSCSPAPTWPPLCCYPQSRPTASAAGPGACMRASGRPHGNTTASTAPPRHPRPRRPGGPALRPTPRPCAGPAPPPASRDCRCRRPRRWPRAGRRGRRAGACKPSCAGAAWSARGAPLCSYRTSCAGSCGARTAPTPAPTCASPSAAASSCCRRRRACSSPTTAWSGACGAGPTAATAAQPGKPRSAAAPGRARA.

2 disordered regions span residues 1–164 and 225–257; these read MERS…AGAC and TAWSGACGAGPTAATAAQPGKPRSAAAPGRARA. Residues 10–28 show a composition bias toward basic and acidic residues; the sequence is CGEEPRSGSRRLPKAEGDK. Over residues 54 to 65 the composition is skewed to basic residues; that stretch reads RPNRASGRRRRS. A compositionally biased stretch (pro residues) spans 125–139; that stretch reads RPTPRPCAGPAPPPA. The segment covering 144 to 162 has biased composition (basic residues); sequence RCRRPRRWPRAGRRGRRAG.

This is an uncharacterized protein from Homo sapiens (Human).